The chain runs to 175 residues: Gamma-crystallin B (175 aa).

Beta/gamma crystallin 'Greek key' domains follow at residues 2–40 (GKITFYEDRGFQGRCYECSSDCPNLQPYFSRCNSIRVDS) and 41–83 (GCWM…RLIP). The interval 84 to 88 (QHSGT) is connecting peptide. 2 Beta/gamma crystallin 'Greek key' domains span residues 89 to 129 (FRMR…NVLD) and 130 to 172 (GCWV…RRVM).

It belongs to the beta/gamma-crystallin family. As to quaternary structure, monomer.

Crystallins are the dominant structural components of the vertebrate eye lens. This Canis lupus familiaris (Dog) protein is Gamma-crystallin B (CRYGB).